Here is a 757-residue protein sequence, read N- to C-terminus: Polyribonucleotide nucleotidyltransferase (757 aa).

Mg(2+) is bound by residues Asp488 and Asp494. The KH domain occupies Pro555 to Ile614. In terms of domain architecture, S1 motif spans Gly624–Lys692. A disordered region spans residues Val693 to Gly757. The segment covering Ala720–Pro736 has biased composition (basic and acidic residues). The span at Pro737–Pro747 shows a compositional bias: low complexity.

This sequence belongs to the polyribonucleotide nucleotidyltransferase family. The cofactor is Mg(2+).

It is found in the cytoplasm. The catalysed reaction is RNA(n+1) + phosphate = RNA(n) + a ribonucleoside 5'-diphosphate. Its function is as follows. Involved in mRNA degradation. Catalyzes the phosphorolysis of single-stranded polyribonucleotides processively in the 3'- to 5'-direction. In Verminephrobacter eiseniae (strain EF01-2), this protein is Polyribonucleotide nucleotidyltransferase.